The chain runs to 135 residues: Small ribosomal subunit protein uS9 (135 aa).

The span at 107–118 shows a compositional bias: basic and acidic residues; sequence LVGDPRRTEPHK. The tract at residues 107–135 is disordered; sequence LVGDPRRTEPHKPNRSTKGPRAKRQKSYR. Positions 119–135 are enriched in basic residues; sequence PNRSTKGPRAKRQKSYR.

It belongs to the universal ribosomal protein uS9 family. Part of the 30S ribosomal subunit.

This chain is Small ribosomal subunit protein uS9, found in Pyrococcus furiosus (strain ATCC 43587 / DSM 3638 / JCM 8422 / Vc1).